The chain runs to 369 residues: Leucine-specific-binding protein (369 aa).

The N-terminal stretch at 1 to 23 (MKRKAKTIIAGIVALAVSQGAMA) is a signal peptide. An intrachain disulfide couples Cys76 to Cys101.

Belongs to the leucine-binding protein family.

The protein resides in the periplasm. In terms of biological role, this protein is a component of the leucine-specific transport system, which is one of the two periplasmic binding protein-dependent transport systems of the high-affinity transport of the branched-chain amino acids. The chain is Leucine-specific-binding protein (livK) from Salmonella typhi.